The following is a 257-amino-acid chain: Global transcriptional regulator CodY (257 aa).

The tract at residues 1–155 is GAF domain; sequence MSLLSKTREL…AATVIGMEIL (155 aa). Residues 203 to 222 constitute a DNA-binding region (H-T-H motif); sequence ASKVADRVGITRSVIVNALR.

This sequence belongs to the CodY family.

The protein localises to the cytoplasm. Functionally, DNA-binding global transcriptional regulator which is involved in the adaptive response to starvation and acts by directly or indirectly controlling the expression of numerous genes in response to nutrient availability. During rapid exponential growth, CodY is highly active and represses genes whose products allow adaptation to nutrient depletion. This is Global transcriptional regulator CodY from Staphylococcus haemolyticus (strain JCSC1435).